The sequence spans 141 residues: Protein C19orf12 homolog (141 aa).

The chain crosses the membrane as a helical span at residues 33–53; that stretch reads LVAAAGAFLGGLVGGPPGIAV.

It belongs to the C19orf12 family.

It is found in the mitochondrion. It localises to the mitochondrion membrane. The protein localises to the endoplasmic reticulum. The protein resides in the cytoplasm. Its subcellular location is the cytosol. In Xenopus tropicalis (Western clawed frog), this protein is Protein C19orf12 homolog.